A 97-amino-acid polypeptide reads, in one-letter code: Nucleoid-associated protein HP_0035 (97 aa).

The protein belongs to the YbaB/EbfC family. Homodimer.

The protein resides in the cytoplasm. It is found in the nucleoid. Its function is as follows. Binds to DNA and alters its conformation. May be involved in regulation of gene expression, nucleoid organization and DNA protection. This chain is Nucleoid-associated protein HP_0035, found in Helicobacter pylori (strain ATCC 700392 / 26695) (Campylobacter pylori).